Reading from the N-terminus, the 88-residue chain is CRISPR-associated endoribonuclease Cas2 3 (88 aa).

D9 lines the Mg(2+) pocket.

Belongs to the CRISPR-associated endoribonuclease Cas2 protein family. Homodimer, forms a heterotetramer with a Cas1 homodimer. Mg(2+) serves as cofactor.

Its function is as follows. CRISPR (clustered regularly interspaced short palindromic repeat), is an adaptive immune system that provides protection against mobile genetic elements (viruses, transposable elements and conjugative plasmids). CRISPR clusters contain sequences complementary to antecedent mobile elements and target invading nucleic acids. CRISPR clusters are transcribed and processed into CRISPR RNA (crRNA). Functions as a ssRNA-specific endoribonuclease. Involved in the integration of spacer DNA into the CRISPR cassette. This Thermodesulfovibrio yellowstonii (strain ATCC 51303 / DSM 11347 / YP87) protein is CRISPR-associated endoribonuclease Cas2 3.